Here is a 342-residue protein sequence, read N- to C-terminus: S-adenosylmethionine:tRNA ribosyltransferase-isomerase (342 aa).

It belongs to the QueA family. Monomer.

It is found in the cytoplasm. It carries out the reaction 7-aminomethyl-7-carbaguanosine(34) in tRNA + S-adenosyl-L-methionine = epoxyqueuosine(34) in tRNA + adenine + L-methionine + 2 H(+). Its pathway is tRNA modification; tRNA-queuosine biosynthesis. Transfers and isomerizes the ribose moiety from AdoMet to the 7-aminomethyl group of 7-deazaguanine (preQ1-tRNA) to give epoxyqueuosine (oQ-tRNA). In Streptococcus pyogenes serotype M49 (strain NZ131), this protein is S-adenosylmethionine:tRNA ribosyltransferase-isomerase.